Consider the following 377-residue polypeptide: Chaperone protein DnaJ (377 aa).

The region spanning 4–69 (DYYEALGVTR…QKRAAYDRFG (66 aa)) is the J domain. Residues 135–213 (GKTAQIRVPT…CHGQGRVTQE (79 aa)) form a CR-type zinc finger. The Zn(2+) site is built by cysteine 148, cysteine 151, cysteine 165, cysteine 168, cysteine 187, cysteine 190, cysteine 201, and cysteine 204. 4 CXXCXGXG motif repeats span residues 148–155 (CDECSGSG), 165–172 (CTMCSGSG), 187–194 (CPGCNGRG), and 201–208 (CEKCHGQG).

This sequence belongs to the DnaJ family. Homodimer. It depends on Zn(2+) as a cofactor.

It localises to the cytoplasm. Functionally, participates actively in the response to hyperosmotic and heat shock by preventing the aggregation of stress-denatured proteins and by disaggregating proteins, also in an autonomous, DnaK-independent fashion. Unfolded proteins bind initially to DnaJ; upon interaction with the DnaJ-bound protein, DnaK hydrolyzes its bound ATP, resulting in the formation of a stable complex. GrpE releases ADP from DnaK; ATP binding to DnaK triggers the release of the substrate protein, thus completing the reaction cycle. Several rounds of ATP-dependent interactions between DnaJ, DnaK and GrpE are required for fully efficient folding. Also involved, together with DnaK and GrpE, in the DNA replication of plasmids through activation of initiation proteins. The polypeptide is Chaperone protein DnaJ (Brucella ovis (strain ATCC 25840 / 63/290 / NCTC 10512)).